The sequence spans 58 residues: UPF0391 membrane protein Sden_3712 (58 aa).

The next 2 helical transmembrane spans lie at 6 to 26 (LTFL…IAGA) and 27 to 47 (AAGI…ISLV).

This sequence belongs to the UPF0391 family.

It localises to the cell membrane. The polypeptide is UPF0391 membrane protein Sden_3712 (Shewanella denitrificans (strain OS217 / ATCC BAA-1090 / DSM 15013)).